A 565-amino-acid chain; its full sequence is NAD-dependent malic enzyme (565 aa).

The Proton donor role is filled by tyrosine 104. Arginine 157 provides a ligand contact to NAD(+). The Proton acceptor role is filled by lysine 175. Residues glutamate 246, aspartate 247, and aspartate 270 each coordinate a divalent metal cation. Residues aspartate 270 and asparagine 418 each contribute to the NAD(+) site.

This sequence belongs to the malic enzymes family. As to quaternary structure, homotetramer. Mg(2+) is required as a cofactor. The cofactor is Mn(2+).

The enzyme catalyses (S)-malate + NAD(+) = pyruvate + CO2 + NADH. It catalyses the reaction oxaloacetate + H(+) = pyruvate + CO2. The protein is NAD-dependent malic enzyme of Salmonella choleraesuis (strain SC-B67).